A 265-amino-acid polypeptide reads, in one-letter code: Hydroxyethylthiazole kinase 2 (265 aa).

M39 provides a ligand contact to substrate. Residues K115 and T168 each coordinate ATP. Residue G195 coordinates substrate.

This sequence belongs to the Thz kinase family. Mg(2+) is required as a cofactor.

It catalyses the reaction 5-(2-hydroxyethyl)-4-methylthiazole + ATP = 4-methyl-5-(2-phosphooxyethyl)-thiazole + ADP + H(+). It participates in cofactor biosynthesis; thiamine diphosphate biosynthesis; 4-methyl-5-(2-phosphoethyl)-thiazole from 5-(2-hydroxyethyl)-4-methylthiazole: step 1/1. Catalyzes the phosphorylation of the hydroxyl group of 4-methyl-5-beta-hydroxyethylthiazole (THZ). In Clostridium botulinum (strain Okra / Type B1), this protein is Hydroxyethylthiazole kinase 2.